Here is a 268-residue protein sequence, read N- to C-terminus: tRNA (guanine-N(7)-)-methyltransferase (268 aa).

A disordered region spans residues Met1–Ser21. Ser21 bears the Phosphoserine mark. S-adenosyl-L-methionine-binding residues include Gly78, Glu101, Arg103, Asn134, Ala135, and Leu154. Asp157 is a catalytic residue. The alphaC helix stretch occupies residues Pro158–Lys166. Positions 232 and 234 each coordinate S-adenosyl-L-methionine. The tract at residues Thr232–Arg240 is alpha6 helix.

It belongs to the class I-like SAM-binding methyltransferase superfamily. TrmB family. In terms of assembly, catalytic component of the METTL1-WDR4 complex, composed of METTL1 and WDR4. Post-translationally, phosphorylation at Ser-21 by PKB/AKT1 inactivates its methyltransferase activity via a steric interference mechanism in the active site that locally disrupts the catalytic center. Phosphorylation at Ser-21 does not affect the interaction with WDR4.

It is found in the nucleus. It catalyses the reaction guanosine(46) in tRNA + S-adenosyl-L-methionine = N(7)-methylguanosine(46) in tRNA + S-adenosyl-L-homocysteine. It carries out the reaction a guanosine in mRNA + S-adenosyl-L-methionine = an N(7)-methylguanosine in mRNA + S-adenosyl-L-homocysteine. The catalysed reaction is a guanosine in miRNA + S-adenosyl-L-methionine = an N(7)-methylguanosine in miRNA + S-adenosyl-L-homocysteine. It functions in the pathway tRNA modification; N(7)-methylguanine-tRNA biosynthesis. In terms of biological role, catalytic component of METTL1-WDR4 methyltransferase complex that mediates the formation of N(7)-methylguanine in a subset of RNA species, such as tRNAs, mRNAs and microRNAs (miRNAs). Catalyzes the formation of N(7)-methylguanine at position 46 (m7G46) in a large subset of tRNAs that contain the 5'-RAGGU-3' motif within the variable loop. M7G46 interacts with C13-G22 in the D-loop to stabilize tRNA tertiary structure and protect tRNAs from decay. Also acts as a methyltransferase for a subset of internal N(7)-methylguanine in mRNAs. Internal N(7)-methylguanine methylation of mRNAs in response to stress promotes their relocalization to stress granules, thereby suppressing their translation. Also methylates a specific subset of miRNAs, such as let-7. N(7)-methylguanine methylation of let-7 miRNA promotes let-7 miRNA processing by disrupting an inhibitory secondary structure within the primary miRNA transcript (pri-miRNA). Acts as a regulator of embryonic stem cell self-renewal and differentiation. This is tRNA (guanine-N(7)-)-methyltransferase from Mus musculus (Mouse).